The following is a 614-amino-acid chain: V-type proton ATPase catalytic subunit A (614 aa).

Residue glycine 247–threonine 254 coordinates ATP.

Belongs to the ATPase alpha/beta chains family. V-ATPase is a heteromultimeric enzyme made up of two complexes: the ATP-hydrolytic V1 complex and the proton translocation V0 complex. The V1 complex consists of three catalytic AB heterodimers that form a heterohexamer, three peripheral stalks each consisting of EG heterodimers, one central rotor including subunits D and F, and the regulatory subunits C and H. The proton translocation complex V0 consists of the proton transport subunit a, a ring of proteolipid subunits c9c'', rotary subunit d, subunits e and f, and the accessory subunits VhaAC45 and ATP6AP2.

The catalysed reaction is ATP + H2O + 4 H(+)(in) = ADP + phosphate + 5 H(+)(out). ATP hydrolysis occurs at the interface between the nucleotide-binding domains of subunits A and B. ATP hydrolysis triggers a conformational change in the subunits D and F, which induces a shift of subunit d. The c-ring is subsequently rotated and results in a continuous proton translocation across the membrane. Catalytic subunit of the V1 complex of vacuolar(H+)-ATPase (V-ATPase), a multisubunit enzyme composed of a peripheral complex (V1) that hydrolyzes ATP and a membrane integral complex (V0) that translocates protons. V-ATPase is responsible for acidifying and maintaining the pH of intracellular compartments and in some cell types, is targeted to the plasma membrane, where it is responsible for acidifying the extracellular environment. The sequence is that of V-type proton ATPase catalytic subunit A (VhaA) from Aedes aegypti (Yellowfever mosquito).